The chain runs to 183 residues: uncharacterized protein (183 aa).

Residues 54–89 (DAASQSDPLPGGDGLTGGDSKATRRTSPRYYPPSEA) form a disordered region.

This is an uncharacterized protein from Human cytomegalovirus (strain AD169) (HHV-5).